A 30-amino-acid polypeptide reads, in one-letter code: 2-enoate reductase (30 aa).

As to quaternary structure, dodecamer; tetramer of trimers. Iron-sulfur cluster serves as cofactor. FAD is required as a cofactor. It depends on FMN as a cofactor.

It carries out the reaction butanoate + NAD(+) = (2E)-2-butenoate + NADH + H(+). Involved in fermentation of amino acids (Stickland reaction) such as leucine, isoleucine, valine and phenylalanine. The sequence is that of 2-enoate reductase from Clostridium tyrobutyricum.